The chain runs to 736 residues: Probable beta-glucosidase L (736 aa).

The first 21 residues, M1 to A21, serve as a signal peptide directing secretion. N224 carries an N-linked (GlcNAc...) asparagine glycan. Residue D252 is part of the active site. N-linked (GlcNAc...) asparagine glycans are attached at residues N295, N363, N429, and N607.

Belongs to the glycosyl hydrolase 3 family.

Its subcellular location is the secreted. It carries out the reaction Hydrolysis of terminal, non-reducing beta-D-glucosyl residues with release of beta-D-glucose.. It functions in the pathway glycan metabolism; cellulose degradation. Functionally, beta-glucosidases are one of a number of cellulolytic enzymes involved in the degradation of cellulosic biomass. Catalyzes the last step releasing glucose from the inhibitory cellobiose. This is Probable beta-glucosidase L (bglL) from Aspergillus terreus (strain NIH 2624 / FGSC A1156).